Reading from the N-terminus, the 253-residue chain is tRNA pseudouridine synthase A (253 aa).

The active-site Nucleophile is the aspartate 53. Tyrosine 112 is a substrate binding site.

This sequence belongs to the tRNA pseudouridine synthase TruA family. As to quaternary structure, homodimer.

The enzyme catalyses uridine(38/39/40) in tRNA = pseudouridine(38/39/40) in tRNA. Formation of pseudouridine at positions 38, 39 and 40 in the anticodon stem and loop of transfer RNAs. The sequence is that of tRNA pseudouridine synthase A from Lactococcus lactis subsp. lactis (strain IL1403) (Streptococcus lactis).